Reading from the N-terminus, the 1789-residue chain is MMMASKDVVPTAASSENANNNSSIKSRLLARLKGSGGATSPPNSIKITNQDMALGLIGQVPAPKATSVDVPKQQRDRPPRTVAEVQQNLRWTERPQDQNVKTWDELDHTTKQQILDEHAEWFDAGGLGPSTLPTSHERYTHENDEGHQVKWSAREGVDLGISGLTTVSGPEWNMCPLPPVDQRSTTPATEPTIGDMIEFYEGHIYHYAIYIGQGKTVGVHSPQAAFSITRITIQPISAWWRVCYVPQPKQRLTYDQLKELENEPWPYAAVTNNCFEFCCQVMCLEDTWLQRKLISSGRFYHPTQDWSRDTPEFQQDSKLEMVRDAVLAAINGLVSRPFKDLLGKLKPLNVLNLLSNCDWTFMGVVEMVVLLLELFGIFWNPPDVSNFIASLLPDFHLQGPEDLARDLVPIVLGGIGLAIGFTRDKVSKMMKNAVDGLRAATQLGQYGLEIFSLLKKYFFGGDQTEKTLKDIESAVIDMEVLSSTSVTQLVRDKQSARAYMAILDNEEEKARKLSVRNADPHVVSSTNALISRISMARAALAKAQAEMTSRMRPVVIMMCGPPGIGKTKAAEHLAKRLANEIRPGGKVGLVPREAVDHWDGYHGEEVMLWDDYGMTKIQEDCNKLQAIADSAPLTLNCDRIENKGMQFVSDAIVITTNAPGPAPVDFVNLGPVCRRVDFLVYCTAPEVEHTRKVSPGDTTALKDCFKPDFSHLKMELAPQGGFDNQGNTPFGKGVMKPTTINRLLIQAVALTMERQDEFQLQGPTYDFDTDRVAAFTRMARANGLGLISMASLGKKLRSVTTIEGLKNALSGYKISKCSIQWQSRVYIIESDGASVQIKEDKQALTPLQQTINTASLAITRLKAARAVAYASCFQSAITTILQMAGSALVINRAVKRMFGTRTAAMALEGPGKEHNCRVHKAKEAGKGPIGHDDMVERFGLCETEEEESEDQIQMVPSDAVPEGKNKGKTKKGRGRKNNYNAFSRRGLSDEEYEEYKKIREEKNGNYSIQEYLEDRQRYEEELAEVQAGGDGGIGETEMEIRHRVFYKSKSKKHQQEQRRQLGLVTGSDIRKRKPIDWTPPKNEWADDDREVDYNEKINFEAPPTLWSRVTKFGSGWGFWVSPTVFITTTHVVPTGVKEFFGEPLSSIAIHQAGEFTQFRFSKKMRPDLTGMVLEEGCPEGTVCSVLIKRDSGELLPLAVRMGAIASMRIQGRLVHGQSGMLLTGANAKGMDLGTIPGDCGAPYVHKRGNDWVVCGVHAAATKSGNTVVCAVQAGEGETALEGGDKGHYAGHEIVRYGSGPALSTKTKFWRSSPEPLPPGVYEPAYLGGKDPRVQNGPSLQQVLRDQLKPFADPRGRMPEPGLLEAAVETVTSMLEQTMDTPSPWSYADACQSLDKTTSSGYPHHKRKNDDWNGTTFVGELGEQAAHANNMYENAKHMKPIYTAALKDELVKPEKIYQKVKKRLLWGADLGTVVRAARAFGPFCDAIKSHVIKLPIKVGMNTIEDGPLIYAEHAKYKNHFDADYTAWDSTQNRQIMTESFSIMSRLTASPELAEVVAQDLLAPSEMDVGDYVIRVKEGLPSGFPCTSQVNSINHWIITLCALSEATGLSPDVVQSMSYFSFYGDDEIVSTDIDFDPARLTQILKEYGLKPTRPDKTEGPIQVRKNVDGLVFLRRTISRDAAGFQGRLDRASIERQIFWTRGPNHSDPSETLVPHTQRKIQLISLLGEASLHGEKFYRKISSKVIHEIKTGGLEMYVPGWQAMFRWMRFHDLGLWTGDRDLLPEFVNDDGV.

The segment at 1–25 is disordered; the sequence is MMMASKDVVPTAASSENANNNSSIK. The tract at residues 1-183 is interaction with host MAP1LC3A/LC3; it reads MMMASKDVVP…MCPLPPVDQR (183 aa). The span at 12 to 23 shows a compositional bias: low complexity; it reads AASSENANNNSS. The interval 184–398 is interaction with NTPase; sequence STTPATEPTI…ASLLPDFHLQ (215 aa). The interval 301–398 is interaction with NS4; that stretch reads HPTQDWSRDT…ASLLPDFHLQ (98 aa). Host ER membrane association regions lie at residues 318 to 349 and 360 to 398; these read KLEMVRDAVLAAINGLVSRPFKDLLGKLKPLN and TFMGVVEMVVLLLELFGIFWNPPDVSNFIASLLPDFHLQ. The tract at residues 399-574 is interaction with NS1-2 and NS4 and homooligomerization; it reads GPEDLARDLV…GKTKAAEHLA (176 aa). The region spanning 532 to 697 is the SF3 helicase domain; the sequence is RISMARAALA…EHTRKVSPGD (166 aa). Residue 560–567 participates in ATP binding; it reads GPPGIGKT. Residues 651–756 form an important for mitochondrion targeting region; the sequence is AIVITTNAPG…AVALTMERQD (106 aa). Residues 826–832 form a functions as endoplasmic reticulum export signal region; it reads YIIESDG. Positions 865–910 are host membrane association; the sequence is RAVAYASCFQSAITTILQMAGSALVINRAVKRMFGTRTAAMALEGP. The interval 958 to 981 is disordered; that stretch reads DAVPEGKNKGKTKKGRGRKNNYNA. Over residues 966-976 the composition is skewed to basic residues; the sequence is KGKTKKGRGRK. The acidic stretch occupies residues 989–994; that stretch reads DEEYEE. Tyr-992 carries the post-translational modification O-(5'-phospho-RNA)-tyrosine. The interval 1084–1100 is interaction with host EIF4G; that stretch reads WADDDREVDYNEKINFE. Positions 1101–1281 constitute a Peptidase C37 domain; it reads APPTLWSRVT…QAGEGETALE (181 aa). Residues His-1130, Glu-1154, and Cys-1239 each act as for 3CLpro activity in the active site. The RdRp catalytic domain maps to 1516-1637; that stretch reads KNHFDADYTA…STDIDFDPAR (122 aa). 4 residues coordinate Mg(2+): Asp-1520, Asp-1522, Asp-1624, and Glu-1625.

As to quaternary structure, homodimer. Homooligomer. Interacts with NTPase; this interaction increases the proapoptotic activity of the NTPase and is crucial for the formation of the viral replication complex. Interacts with NS4; this interaction is crucial for the formation of the viral replication complex. Interacts (via N-terminus) with host VAPA. Interacts with host MAP1LC3A/LC3; this interaction does not seem to be linked to host autophagy, but rather plays a role in the formation of viral factories. Homooligomer. Interacts with NS1-2; this interaction increases the proapoptotic activity of the NTPase and is crucial for the formation of the viral replication complex. Interacts with NS4; this interaction increases the proapoptotic activity of the NTPase. In terms of assembly, homodimer. Monomer; in solution. As to quaternary structure, interacts with NTPase; this interaction increases the proapoptotic activity of the NTPase. Interacts with NS1-2; this interaction is crucial for the formation of the viral replication complex. Monomer. Interacts with the RNA-directed RNA polymerase; this interaction induces the multimerization of the RdRp and enhances its activity. Interacts with host IEF4G1; this interaction plays a role in translation of viral proteins. In terms of assembly, homohexamer; also forms fibrous hexameric oligomer. Interacts with the viral genome-linked protein; this interaction induces the multimerization of the RdRp and enhances its activity. The cofactor is Mg(2+). Mn(2+) is required as a cofactor. Post-translationally, specific enzymatic cleavages in vivo yield mature proteins. 3CLpro is first autocatalytically cleaved, then processes the whole polyprotein. NS1/2-3 and NS3-4 sites are cleaved rapidly and NS4-5, NS5-6, and NS6-7 sites are processed subsequently and less efficiently. VPg is uridylylated by the polymerase and is covalently attached to the 5'-end of the polyadenylated genomic and subgenomic RNAs. This uridylylated form acts as a nucleotide-peptide primer for the polymerase. In terms of processing, cleaved by host CASP3/caspase 3 at 18-22 h.p.i. The cleavage allows NS1 secretion, which is essential for intestinal infection and resistance to IFN-lambda.

Its subcellular location is the host Golgi apparatus membrane. The protein resides in the secreted. It localises to the host endoplasmic reticulum membrane. The protein localises to the host cytoplasm. It is found in the host perinuclear region. The catalysed reaction is a ribonucleoside 5'-triphosphate + H2O = a ribonucleoside 5'-diphosphate + phosphate + H(+). It catalyses the reaction Endopeptidase with a preference for cleavage when the P1 position is occupied by Glu-|-Xaa and the P1' position is occupied by Gly-|-Yaa.. It carries out the reaction RNA(n) + a ribonucleoside 5'-triphosphate = RNA(n+1) + diphosphate. Inhibited by the chemical compound K36/GC376, which covalently binds to the nucleophilic cysteine residue. Inhibited by various macrocyclic inhibitors. With respect to regulation, inhibited by the guanidine salt GuHCl. Its function is as follows. Induces the proliferation of the host smooth ER membranes forming long tubular structures. These remodeled membranes probably form the viral factories that contain the replication complex. Induces the disassembly of host Golgi. May play a role in viral replication by interacting with host VAPA, a vesicle-associated membrane protein that plays a role in SNARE-mediated vesicle fusion. This interaction may target replication complex to intracellular membranes. Functionally, displays NTPase activity and RNA helix-unwinding activity. Displays RNA chaperone-like activity and destabilizes dsRNA. Induces the formation of convoluted membranes derived from the host ER. These remodeled membranes probably form the viral factories that contain the replication complex. Initiates host cell death by targeting the mitochondrial outer membrane, leading to the permeabilization of mitochondria, programmed host cell death and viral egress. Probably plays a role in preventing the assembly of host stress granules. Probable key protein responsible for the formation of membrane alterations by the virus. Induces the formation of convoluted membranes derived from the host ER. These remodeled membranes probably form the viral factories that contain the replication complex. May play a role in targeting replication complex to intracellular membranes. Induces the disassembly of host Golgi and antagonism of Golgi-dependent cellular protein secretion, probably via the mislocalization of COPII-coated vesicles. In terms of biological role, viral genome-linked protein is covalently linked to the 5'-end of the positive-strand, negative-strand genomic RNAs and subgenomic RNA. Acts as a genome-linked replication primer. May recruit ribosome to viral RNA thereby promoting viral proteins translation. Interacts with host translation initiation complex to allow the translation of viral proteins. Induces the formation of aggregates of RNA-directed RNA polymerase in the presence of RNA. Through its interaction with the viral RNA-directed RNA polymerase, plays a crucial role in enhancing the polymerase activity. Its function is as follows. Processes the polyprotein. 3CLpro-RdRp is first released by autocleavage, then all other proteins are cleaved. May cleave host polyadenylate-binding protein thereby inhibiting cellular translation. Functionally, replicates genomic and antigenomic RNA by recognizing replications specific signals. Also transcribes a subgenomic mRNA by initiating RNA synthesis internally on antigenomic RNA. This sgRNA codes for structural proteins. Catalyzes the covalent attachment VPg with viral RNAs. The sequence is that of Genome polyprotein from Norovirus (strain Human/NoV/United States/Norwalk/1968/GI) (Hu/NV/NV/1968/US).